The following is a 334-amino-acid chain: NAC domain-containing protein 66 (334 aa).

The NAC domain occupies 11–175 (VPPGFRFHPT…GWVVCRVFKK (165 aa)). A DNA-binding region spans residues 111 to 181 (IGMRKTLVFY…VFKKNNLCKN (71 aa)).

As to expression, mostly expressed in anthers. Also present in pollen, base of siliques and inflorescence stems.

The protein resides in the nucleus. Transcription activator of genes involved in biosynthesis of secondary walls. Together with NST1, required for the secondary cell wall thickening of the anther endocethium, which is necessary for anther dehiscence. May also regulate the secondary cell wall lignification of other tissues such as tracheary elements. The protein is NAC domain-containing protein 66 (NAC066) of Arabidopsis thaliana (Mouse-ear cress).